The sequence spans 501 residues: Dipeptide and tripeptide permease B (501 aa).

Residues 1-27 (MRPSAPTGLLQQPKPFFMIFFVELWER) lie on the Cytoplasmic side of the membrane. Residues 28–48 (FGYYGVQGILAVFFVQQLGFS) form a helical membrane-spanning segment. Topologically, residues 49–52 (QEQS) are periplasmic. A helical membrane pass occupies residues 53-73 (FITFGAFSALVYGLISVGGYV). The Cytoplasmic portion of the chain corresponds to 74-82 (GDHVLGTKR). Residues 83–103 (TMVLGAIVLVIGYFMTGMSIY) traverse the membrane as a helical segment. Residues 104–106 (NPD) lie on the Periplasmic side of the membrane. A helical transmembrane segment spans residues 107-127 (LIFYALGTIAVGNCLFKANPA). The Cytoplasmic portion of the chain corresponds to 128 to 146 (SLLAKCYERGDPRLDGAFT). The chain crosses the membrane as a helical span at residues 147 to 167 (LFYMSINIGSLISLSLAPVIA). Topologically, residues 168 to 172 (DHYGY) are periplasmic. A helical transmembrane segment spans residues 173–193 (TVTYNLCGVGLVIALLTFFAC). Residues 194–211 (RHMVRDIGSEPDHLPLDY) lie on the Cytoplasmic side of the membrane. The chain crosses the membrane as a helical span at residues 212–232 (GKLLLVLLGSVALVFFCAWLM). A topological domain (periplasmic) is located at residue histidine 233. A helical transmembrane segment spans residues 234–254 (HVVIANMVLMTVTLAVVIFFF). The Cytoplasmic segment spans residues 255–267 (REAFKLDAVARNK). Residues 268 to 288 (MYVAFVLMLEAVVFYVLYAQM) form a helical membrane-spanning segment. Over 289–311 (PTSLNFFAINNMHHEMLGMSVNP) the chain is Periplasmic. The helical transmembrane segment at 312 to 332 (ISFQALNPFWVVVGSPVLAMI) threads the bilayer. The Cytoplasmic portion of the chain corresponds to 333–350 (YTRLGSKGRDLTMPLKFT). A helical transmembrane segment spans residues 351–371 (LGMLFCSLGFLTAAASGIWFA). The Periplasmic segment spans residues 372 to 380 (DAQGLTSPW). The chain crosses the membrane as a helical span at residues 381-401 (FMVLIYLFQSLGELMISALGL). Over 402–411 (AMVAALVPQR) the chain is Cytoplasmic. Residues 412–432 (LMGFILGMWFLTQAMASLLGG) form a helical membrane-spanning segment. Residues 433 to 456 (YVATFTAVPQGVTDPLQTLPIYTD) are Periplasmic-facing. Residues 457-477 (VFGKIGLVTLLVAVVMALMVP) form a helical membrane-spanning segment. Residues 478 to 501 (WLNRMMHAGQGEEGEDLLSQQAKA) lie on the Cytoplasmic side of the membrane.

This sequence belongs to the major facilitator superfamily. Proton-dependent oligopeptide transporter (POT/PTR) (TC 2.A.17) family. DtpB subfamily.

It is found in the cell inner membrane. In terms of biological role, proton-dependent permease that transports di- and tripeptides. The chain is Dipeptide and tripeptide permease B from Aeromonas hydrophila subsp. hydrophila (strain ATCC 7966 / DSM 30187 / BCRC 13018 / CCUG 14551 / JCM 1027 / KCTC 2358 / NCIMB 9240 / NCTC 8049).